We begin with the raw amino-acid sequence, 411 residues long: Protein CNPPD1 (411 aa).

The helical transmembrane segment at 231–253 (LSCLLAMAYVSSVALAVASMAVI) threads the bilayer.

It belongs to the CNPPD1 family.

It is found in the membrane. The polypeptide is Protein CNPPD1 (CNPPD1) (Bos taurus (Bovine)).